The primary structure comprises 219 residues: ATP phosphoribosyltransferase (219 aa).

This sequence belongs to the ATP phosphoribosyltransferase family. Short subfamily. In terms of assembly, heteromultimer composed of HisG and HisZ subunits.

The protein localises to the cytoplasm. The enzyme catalyses 1-(5-phospho-beta-D-ribosyl)-ATP + diphosphate = 5-phospho-alpha-D-ribose 1-diphosphate + ATP. It participates in amino-acid biosynthesis; L-histidine biosynthesis; L-histidine from 5-phospho-alpha-D-ribose 1-diphosphate: step 1/9. Its function is as follows. Catalyzes the condensation of ATP and 5-phosphoribose 1-diphosphate to form N'-(5'-phosphoribosyl)-ATP (PR-ATP). Has a crucial role in the pathway because the rate of histidine biosynthesis seems to be controlled primarily by regulation of HisG enzymatic activity. The chain is ATP phosphoribosyltransferase from Clostridium kluyveri (strain NBRC 12016).